Here is a 508-residue protein sequence, read N- to C-terminus: Glycerol kinase (508 aa).

Residue Thr-14 coordinates ADP. 3 residues coordinate ATP: Thr-14, Thr-15, and Ser-16. Thr-14 is a sn-glycerol 3-phosphate binding site. Residue Arg-18 participates in ADP binding. The sn-glycerol 3-phosphate site is built by Arg-84, Glu-85, Tyr-136, and Asp-245. 5 residues coordinate glycerol: Arg-84, Glu-85, Tyr-136, Asp-245, and Gln-246. 2 residues coordinate ADP: Thr-267 and Gly-314. Positions 267, 314, 318, and 415 each coordinate ATP. ADP is bound by residues Gly-415 and Asn-419.

Belongs to the FGGY kinase family.

It catalyses the reaction glycerol + ATP = sn-glycerol 3-phosphate + ADP + H(+). It participates in polyol metabolism; glycerol degradation via glycerol kinase pathway; sn-glycerol 3-phosphate from glycerol: step 1/1. Its activity is regulated as follows. Inhibited by fructose 1,6-bisphosphate (FBP). Its function is as follows. Key enzyme in the regulation of glycerol uptake and metabolism. Catalyzes the phosphorylation of glycerol to yield sn-glycerol 3-phosphate. This Bordetella parapertussis (strain 12822 / ATCC BAA-587 / NCTC 13253) protein is Glycerol kinase.